Here is a 137-residue protein sequence, read N- to C-terminus: Large ribosomal subunit protein uL16 (137 aa).

Belongs to the universal ribosomal protein uL16 family. As to quaternary structure, part of the 50S ribosomal subunit.

Its function is as follows. Binds 23S rRNA and is also seen to make contacts with the A and possibly P site tRNAs. This is Large ribosomal subunit protein uL16 from Roseobacter denitrificans (strain ATCC 33942 / OCh 114) (Erythrobacter sp. (strain OCh 114)).